Consider the following 1166-residue polypeptide: MEVEKSKYRSEDLDVVEEEADLKKSRRDRDRSNERKKDKGSEKRREKDRRKKRVKSSDSEDDYDRDDDEEREKRKEKERERRRRDKDRVKRRSERRKSSDSEDDVEEEDERDKRRVNEKERGHREHERDRGKDRKRDREREERKDKEREREKDRERREREREEREKERVKERERREREDGERDRREREKERGSRRNRERERSREVGNEESDDDVKRDLKRRRKEGGERKEKEREKSVGRSSRHEDSPKRKSVEDNGEKKEKKTREEELEDEQKKLDEEVEKRRRRVQEWQELKRKKEEAESESKGDADGNEPKAGKAWTLEGESDDEEGHPEEKSETEMDVDEETKPENDGDAKMVDLENETAATVSESGGDGAVDEEEIDPLDAFMNTMVLPEVEKFCNGAPPPAVNDGTLDSKMNGKESGDRPKKGFNKALGRIIQGEDSDSDYSEPKNDDDPSLDEDDEEFMKRVKKTKAEKLSLVDHSKIEYEPFRKNFYIEVKDISRMTQEEVNTYRKELELKVHGKDVPRPIKFWHQTGLTSKILDTMKKLNYEKPMPIQTQALPIIMSGRDCIGVAKTGSGKTLGFVLPMLRHIKDQPPVEAGDGPIGLVMAPTRELVQQIHSDIRKFSKPLGIRCVPVYGGSGVAQQISELKRGTEIVVCTPGRMIDILCTSSGKITNLRRVTFLVMDEADRMFDMGFEPQITRIIQNIRPERQTVLFSATFPRQVETLARKVLNKPVEIQVGGRSVVNKDITQLVEVRPESDRFLRLLELLGEWSEKGKILVFVQSQEKCDALYRDMIKSSYPCLSLHGGKDQTDRESTISDFKNDVCNLLIATSVAARGLDVKELELVVNFDAPNHYEDYVHRVGRTGRAGRKGCAVTFISEDDAKYAPDLVKALELSEQPVPDDLKALADGFMVKVKQGIEQAHGTGYGGSGFKFNEEEEEVRKAAKKAQAKEYGFEEDKSDSEDENDVVRKAGGGEISQQQATFAQIAAIAAAAKAAAAAPVSAPVTANQLLANGGGLAAMPGVLPVTVPTLPSEGAGRAAAMVAAMNLQHNLAKIQADAMPEHYEAELEINDFPQNARWKVTHKETLGPISEWTGAAITTRGQFYPTGRIPGPGERKLYLFIEGPSEKSVKHAKAELKRVLEDITNQAMSSLPGGASGRYSVL.

Basic and acidic residues-rich tracts occupy residues 1-12 (MEVEKSKYRSED) and 21-45 (DLKK…EKRR). Positions 1–460 (MEVEKSKYRS…NDDDPSLDED (460 aa)) are disordered. Residues 14–95 (DVVEEEADLK…KDRVKRRSER (82 aa)) are a coiled coil. Acidic residues predominate over residues 59 to 70 (SEDDYDRDDDEE). Basic residues predominate over residues 80-95 (ERRRRDKDRVKRRSER). Residues 101–110 (SEDDVEEEDE) are compositionally biased toward acidic residues. Basic and acidic residues predominate over residues 111 to 206 (RDKRRVNEKE…RERERSREVG (96 aa)). The stretch at 130 to 302 (RGKDRKRDRE…KRKKEEAESE (173 aa)) forms a coiled coil. S210 bears the Phosphoserine mark. A compositionally biased stretch (basic and acidic residues) spans 224–314 (EGGERKEKER…GDADGNEPKA (91 aa)). S324 is modified (phosphoserine). Basic and acidic residues-rich tracts occupy residues 344-357 (ETKP…KMVD) and 416-426 (MNGKESGDRPK). A Q motif motif is present at residues 529-557 (KFWHQTGLTSKILDTMKKLNYEKPMPIQT). One can recognise a Helicase ATP-binding domain in the interval 560–738 (LPIIMSGRDC…RKVLNKPVEI (179 aa)). ATP is bound at residue 573-580 (AKTGSGKT). The short motif at 686-689 (DEAD) is the DEAD box element. A Helicase C-terminal domain is found at 749–910 (DITQLVEVRP…PVPDDLKALA (162 aa)).

It belongs to the DEAD box helicase family. DDX46/PRP5 subfamily.

It localises to the nucleus. The enzyme catalyses ATP + H2O = ADP + phosphate + H(+). In terms of biological role, helicase required for pre-mRNA splicing, cold-responsive gene regulation and cold tolerance. In Arabidopsis thaliana (Mouse-ear cress), this protein is DEAD-box ATP-dependent RNA helicase 42 (RH42).